The chain runs to 450 residues: Protein tweety homolog 1 (450 aa).

Topologically, residues 1–43 (MGAPPGYRPSAWVHLLHQLPRADFQLRPVPSGFAPRDQEYQQA) are extracellular. A helical transmembrane segment spans residues 44–64 (LLLVAALAGLGLGLSLIFIAV). At 65-88 (YLIRFCCCRPPEPPGAKSPPPGGG) the chain is on the cytoplasmic side. The helical transmembrane segment at 89–109 (CVTWSCIAALLVGCAGIGIGF) threads the bilayer. Over 110 to 214 (YGNSETSDGV…DVTFVEEYRW (105 aa)) the chain is Extracellular. Asn-130 carries N-linked (GlcNAc...) asparagine glycosylation. Residues 215–235 (LAYVLLLLLVLLVCLFTLLGL) form a helical membrane-spanning segment. Topologically, residues 236 to 240 (AKQSK) are cytoplasmic. Residues 241–261 (WLVVVMTAMSLLVLVLSWGSM) form a helical membrane-spanning segment. At 262 to 390 (GLEAATAVGL…LRGLCEDALE (129 aa)) the chain is on the extracellular side. 2 disulfides stabilise this stretch: Cys-275–Cys-385 and Cys-303–Cys-370. N-linked (GlcNAc...) asparagine glycans are attached at residues Asn-284 and Asn-355. A helical transmembrane segment spans residues 391–411 (GLLFLMLFSLLSAGALATTLC). At 412–450 (SLPRAWALFPPSDDYDDTDDDDPFNPQESKRFVQWQSSI) the chain is on the cytoplasmic side. The interval 428–450 (DTDDDDPFNPQESKRFVQWQSSI) is disordered. Residue Ser-440 is modified to Phosphoserine.

Belongs to the tweety family. Homotetramer; disulfide-linked. Homodimer. Post-translationally, N-glycosylated. Contains high-mannose, hybrid and complex oligosaccharides.

The protein resides in the cell membrane. The catalysed reaction is chloride(in) = chloride(out). The enzyme catalyses L-glutamate(out) = L-glutamate(in). Calcium-independent, swelling-dependent volume-regulated anion channel (VRAC-swell) which plays a pivotal role in the process of regulatory volume decrease (RVD) in the brain through the efflux of anions like chloride and organic osmolytes like glutamate. This Rattus norvegicus (Rat) protein is Protein tweety homolog 1 (Ttyh1).